Here is a 528-residue protein sequence, read N- to C-terminus: Protein spinster homolog 1 (528 aa).

Residues 1–49 form a disordered region; that stretch reads MAGSDTAPFLSQADDPDDGPVPGTPGLPGSTGNPKSEEPEVPDQEGLQR. Residue Ala-2 is modified to N-acetylalanine. The next 12 membrane-spanning stretches (helical) occupy residues 50 to 70, 98 to 118, 127 to 147, 160 to 180, 187 to 207, 218 to 238, 278 to 298, 323 to 343, 357 to 377, 381 to 401, 421 to 441, and 465 to 485; these read ITGL…YINL, GLIQ…FGYL, LMCG…FIPG, VGVG…DLFV, MLSI…IAGS, WALR…FLVV, LGFT…PAFL, LIFG…GVEI, LVCA…LACA, IVAT…NWAI, FQIV…IGLI, and MLCA…AIFI. Ser-518 carries the post-translational modification Phosphoserine.

This sequence belongs to the major facilitator superfamily. Spinster (TC 2.A.1.49) family. In terms of assembly, interacts with BCL2 and BCL2L1.

It is found in the lysosome membrane. The protein resides in the mitochondrion inner membrane. The catalysed reaction is a 1-acyl-sn-glycero-3-phosphocholine(out) + H(+)(out) = a 1-acyl-sn-glycero-3-phosphocholine(in) + H(+)(in). The enzyme catalyses 1-hexadecanoyl-sn-glycero-3-phosphocholine(out) + H(+)(out) = 1-hexadecanoyl-sn-glycero-3-phosphocholine(in) + H(+)(in). It carries out the reaction 1-(9Z-octadecenoyl)-sn-glycero-3-phosphocholine(out) + H(+)(out) = 1-(9Z-octadecenoyl)-sn-glycero-3-phosphocholine(in) + H(+)(in). It catalyses the reaction 1-(5Z,8Z,11Z,14Z-eicosatetraenoyl)-sn-glycero-3-phosphocholine(out) + H(+)(out) = 1-(5Z,8Z,11Z,14Z-eicosatetraenoyl)-sn-glycero-3-phosphocholine(in) + H(+)(in). The catalysed reaction is 1-(4Z,7Z,10Z,13Z,16Z,19Z-docosahexaenoyl)-sn-glycero-3-phosphocholine(out) + H(+)(out) = 1-(4Z,7Z,10Z,13Z,16Z,19Z-docosahexaenoyl)-sn-glycero-3-phosphocholine(in) + H(+)(in). The enzyme catalyses a 1-acyl-sn-glycero-3-phosphoethanolamine(out) + H(+)(out) = a 1-acyl-sn-glycero-3-phosphoethanolamine(in) + H(+)(in). It carries out the reaction 1-(9Z-octadecenoyl)-sn-glycero-3-phosphoethanolamine(out) + H(+)(out) = 1-(9Z-octadecenoyl)-sn-glycero-3-phosphoethanolamine(in) + H(+)(in). It catalyses the reaction 1-acyl-sn-glycero-3-phospho-(1'-sn-glycerol)(out) + H(+)(out) = 1-acyl-sn-glycero-3-phospho-(1'-sn-glycerol)(in) + H(+)(in). The catalysed reaction is 1-(9Z-octadecenoyl)-sn-glycero-3-phospho-(1'-sn-glycerol)(out) + H(+)(out) = 1-(9Z-octadecenoyl)-sn-glycero-3-phospho-(1'-sn-glycerol)(in) + H(+)(in). The enzyme catalyses a 1-O-(1Z-alkenyl)-sn-glycero-3-phosphocholine(out) + H(+)(out) = a 1-O-(1Z-alkenyl)-sn-glycero-3-phosphocholine(in) + H(+)(in). It carries out the reaction 1-(1Z-hexadecenyl)-sn-glycero-3-phosphocholine(out) + H(+)(out) = 1-(1Z-hexadecenyl)-sn-glycero-3-phosphocholine(in) + H(+)(in). It catalyses the reaction a 1-O-(1Z-alkenyl)-sn-glycero-3-phosphoethanolamine(out) + H(+)(out) = a 1-O-(1Z-alkenyl)-sn-glycero-3-phosphoethanolamine(in) + H(+)(in). The catalysed reaction is 1-O-(1Z-hexadecenyl)-sn-glycero-3-phosphoethanolamine(out) + H(+)(out) = 1-O-(1Z-hexadecenyl)-sn-glycero-3-phosphoethanolamine(in) + H(+)(in). Plays a critical role in the phospholipid salvage pathway from lysosomes to the cytosol. Mediates the rate-limiting, proton-dependent, lysosomal efflux of lysophospholipids, which can then be reacylated by acyltransferases in the endoplasmic reticulum to form phospholipids. Selective for zwitterionic headgroups such as lysophosphatidylcholine (LPC) and lysophosphatidylethanolamine (LPE), can also transport lysophosphatidylglycerol (LPG), but not other anionic lysophospholipids, sphingosine, nor sphingomyelin. Transports lysophospholipids with saturated, monounsaturated, and polyunsaturated fatty acids, such as 1-hexadecanoyl-sn-glycero-3-phosphocholine, 1-(9Z-octadecenoyl)-sn-glycero-3-phosphocholine and 1-(4Z,7Z,10Z,13Z,16Z,19Z-docosahexaenoyl)-sn-glycero-3-phosphocholine, respectively. Can also transport lysoplasmalogen (LPC with a fatty alcohol) such as 1-(1Z-hexadecenyl)-sn-glycero-3-phosphocholine. Lysosomal LPC could function as intracellular signaling messenger. Essential player in lysosomal homeostasis. Crucial for cell survival under conditions of nutrient limitation. May be involved in necrotic or autophagic cell death. This Homo sapiens (Human) protein is Protein spinster homolog 1 (SPNS1).